The following is a 303-amino-acid chain: Putative S-adenosyl-L-methionine-dependent methyltransferase ML2020 (303 aa).

Residues Asp-130 and Asp-159 to Leu-160 contribute to the S-adenosyl-L-methionine site.

It belongs to the UPF0677 family.

Its function is as follows. Exhibits S-adenosyl-L-methionine-dependent methyltransferase activity. This Mycobacterium leprae (strain TN) protein is Putative S-adenosyl-L-methionine-dependent methyltransferase ML2020.